A 443-amino-acid polypeptide reads, in one-letter code: MGSKLYIRTFGCQMNEYDSAKMADILLSEKGMELAETPEEADLILFNTCSVREKAQEKVFHDLGRVRHLKNSKPDLLIGVGGCVASQEGPEIVKRAPFVDLVFGPQTLHRLPDLIDARRRTGRPQVDISFPEIEKFDRLPPARTEGSTAFVSIMEGCSKYCSFCVVPYTRGEEVSRPLDDVLTEVAGLAIQGVKEVTLLGQNVNAYLGKMINGEIADFATLLDYIHEIPGIERIRYTTSHPREFTARLIEAYQRLPKLVGHVHLPVQSGSDRILAAMKRGYTTVEYKSIVRKLRLVRPDISISSDFIIGFPGETEDDFEATMKLIDDVHFDESFSFIYSPRPGTPAADLPDNTSHQIKLTRLYRLQEKIQLNAQAISQGMVDTVQRILVEGPSRKDPGEFCGRTDNNRVVNFAGHAGLTGSFIDIRITAVSSHTLRGEISDMQ.

The MTTase N-terminal domain maps to 3-120; it reads SKLYIRTFGC…LPDLIDARRR (118 aa). 6 residues coordinate [4Fe-4S] cluster: Cys-12, Cys-49, Cys-83, Cys-157, Cys-161, and Cys-164. The 233-residue stretch at 143 to 375 folds into the Radical SAM core domain; the sequence is RTEGSTAFVS…QEKIQLNAQA (233 aa). Residues 378–441 enclose the TRAM domain; the sequence is QGMVDTVQRI…SHTLRGEISD (64 aa).

This sequence belongs to the methylthiotransferase family. MiaB subfamily. As to quaternary structure, monomer. [4Fe-4S] cluster is required as a cofactor.

It is found in the cytoplasm. It carries out the reaction N(6)-dimethylallyladenosine(37) in tRNA + (sulfur carrier)-SH + AH2 + 2 S-adenosyl-L-methionine = 2-methylsulfanyl-N(6)-dimethylallyladenosine(37) in tRNA + (sulfur carrier)-H + 5'-deoxyadenosine + L-methionine + A + S-adenosyl-L-homocysteine + 2 H(+). In terms of biological role, catalyzes the methylthiolation of N6-(dimethylallyl)adenosine (i(6)A), leading to the formation of 2-methylthio-N6-(dimethylallyl)adenosine (ms(2)i(6)A) at position 37 in tRNAs that read codons beginning with uridine. The polypeptide is tRNA-2-methylthio-N(6)-dimethylallyladenosine synthase (Nitrosomonas europaea (strain ATCC 19718 / CIP 103999 / KCTC 2705 / NBRC 14298)).